The primary structure comprises 115 residues: Prefoldin subunit beta (115 aa).

This sequence belongs to the prefoldin subunit beta family. In terms of assembly, heterohexamer of two alpha and four beta subunits.

It is found in the cytoplasm. Its function is as follows. Molecular chaperone capable of stabilizing a range of proteins. Seems to fulfill an ATP-independent, HSP70-like function in archaeal de novo protein folding. The sequence is that of Prefoldin subunit beta from Methanococcus aeolicus (strain ATCC BAA-1280 / DSM 17508 / OCM 812 / Nankai-3).